A 165-amino-acid polypeptide reads, in one-letter code: Transcriptional repressor NrdR (165 aa).

A zinc finger spans residues 3-34 (CPFCRNPDSRVVDSRMADDGSAIRRRRQCPEC). In terms of domain architecture, ATP-cone spans 46 to 136 (LTVIKRSGVG…VYQAFESLED (91 aa)).

Belongs to the NrdR family. It depends on Zn(2+) as a cofactor.

Functionally, negatively regulates transcription of bacterial ribonucleotide reductase nrd genes and operons by binding to NrdR-boxes. In Arthrobacter sp. (strain FB24), this protein is Transcriptional repressor NrdR.